A 604-amino-acid polypeptide reads, in one-letter code: Protein TAX4 (604 aa).

Disordered stretches follow at residues 38-77, 133-249, 267-300, 338-380, and 394-428; these read HPNGNAGSAERPRHLKVESAPVVKSEPSLPRMRQPEPRSI, FSNR…RQQE, GTLPDLIPRSQRKTSKPRFKHKLLRSPEQQQENL, DETF…KGLK, and PFPHHHHHHHQLHNPNSHHLHTHHHTSSHKFNEDK. The segment covering 176-185 has biased composition (polar residues); the sequence is YDNNVRSRSI. 2 stretches are compositionally biased toward low complexity: residues 186-203 and 224-240; these read SPQVSYSTSLSSSCSISS and SMSSYSLASKASAKASL. Composition is skewed to basic residues over residues 276–290, 366–379, and 396–421; these read SQRKTSKPRFKHKLL, KKKKSRRSKIKKGL, and PHHHHHHHQLHNPNSHHLHTHHHTSS. The 91-residue stretch at 469–559 folds into the EH domain; the sequence is ANEDDESHLQ…RVWNSVDGYV (91 aa).

This sequence belongs to the IRS4 family. Interacts with INP51.

Functionally, with IRS4, acts as a positive regulator of INP51 activity and phosphatidylinositol 4,5-bisphosphate turnover. Negatively regulates signaling through the cell integrity pathway, including the MAP kinase SLT2. The protein is Protein TAX4 (TAX4) of Saccharomyces cerevisiae (strain YJM789) (Baker's yeast).